The primary structure comprises 585 residues: MSHPHSHSIYLSELPVRKPQALGNPLLRKIQRACRMSLAEPDLALNLDIADYINEKQGAAPRDAAIALAKLINNRESHVAIFALSLLDVLVKNCGYPFHLQISRKEFLNELVKRFPGHPPLRYSKIQRLILTAIEEWYQTICKHSSYKNDMGYIRDMHRLLKYKGYAFPKISESDLAVLKPSNQLKTASEIQKEQEIAQAAKLEELIRRGKPEDLREANKLMKIMAGFKEDNAVQAKQAISSELNKLKRKADLLNEMLESPDSQNWDNETTQELHSALKVAQPKFQKIIEEEQEDDALVQDLLKFNDTVNQLLEKFNLLKNGDSNAASQIHPSHVSAPLQQSSGALTNEINLIDFNDLDEAPSQGNNNTNGTGTPAAAETSVNDLLGDLTDLSISNPSTANQASFGLGGDIVLGSSQPAPPVTTTNNSNNTLDLLGLSTPQSPTNSQAVNSSGFDLLMGFNPTTGTTTAPARTLVNQSPNLKIEFEISRESNSVIRIKSFFTNLSSSPISNLVFLLAVPKSMSLKLQPQSSNFMIGNAKDGISQEGTIENAPANPSKALKVKWKVNYSVNSTQAEETAVFTLPNV.

Residues 33–169 (ACRMSLAEPD…LLKYKGYAFP (137 aa)) enclose the VHS domain. Glycyl lysine isopeptide (Lys-Gly) (interchain with G-Cter in ubiquitin) cross-links involve residues Lys180 and Lys287. Positions 196–321 (EIAQAAKLEE…LLEKFNLLKN (126 aa)) constitute a GAT domain. The disordered stretch occupies residues 358–378 (LDEAPSQGNNNTNGTGTPAAA). Positions 365–374 (GNNNTNGTGT) are enriched in low complexity. One can recognise a GAE domain in the interval 466–581 (TTTAPARTLV…TQAEETAVFT (116 aa)).

In terms of assembly, binds to ARF1 and ARF2.

The protein resides in the golgi apparatus. The protein localises to the trans-Golgi network. May play a role in the regulation of membrane traffic through the trans-Golgi network. The chain is ADP-ribosylation factor-binding protein GGA2 (GGA2) from Saccharomyces cerevisiae (strain ATCC 204508 / S288c) (Baker's yeast).